Reading from the N-terminus, the 332-residue chain is 2,3-diketo-L-gulonate reductase (332 aa).

His44 acts as the Proton donor in catalysis. Residues Ile168–Ser174, Trp224–Lys225, and Gly304–Glu306 each bind NAD(+).

Belongs to the LDH2/MDH2 oxidoreductase family. DlgD subfamily. As to quaternary structure, homodimer.

It is found in the cytoplasm. The catalysed reaction is 3-dehydro-L-gulonate + NAD(+) = 2,3-dioxo-L-gulonate + NADH + H(+). It catalyses the reaction 3-dehydro-L-gulonate + NADP(+) = 2,3-dioxo-L-gulonate + NADPH + H(+). In terms of biological role, catalyzes the reduction of 2,3-diketo-L-gulonate in the presence of NADH, to form 3-keto-L-gulonate. The polypeptide is 2,3-diketo-L-gulonate reductase (Salmonella paratyphi B (strain ATCC BAA-1250 / SPB7)).